Reading from the N-terminus, the 294-residue chain is tRNA dimethylallyltransferase (294 aa).

10–17 (GITASGKS) contributes to the ATP binding site. 12-17 (TASGKS) lines the substrate pocket. Residues 36–39 (DSKQ) form an interaction with substrate tRNA region.

This sequence belongs to the IPP transferase family. In terms of assembly, monomer. It depends on Mg(2+) as a cofactor.

It carries out the reaction adenosine(37) in tRNA + dimethylallyl diphosphate = N(6)-dimethylallyladenosine(37) in tRNA + diphosphate. Its function is as follows. Catalyzes the transfer of a dimethylallyl group onto the adenine at position 37 in tRNAs that read codons beginning with uridine, leading to the formation of N6-(dimethylallyl)adenosine (i(6)A). This chain is tRNA dimethylallyltransferase, found in Wolbachia sp. subsp. Drosophila simulans (strain wRi).